Here is a 100-residue protein sequence, read N- to C-terminus: Large ribosomal subunit protein bL21 (100 aa).

It belongs to the bacterial ribosomal protein bL21 family. As to quaternary structure, part of the 50S ribosomal subunit. Contacts protein L20.

This protein binds to 23S rRNA in the presence of protein L20. The chain is Large ribosomal subunit protein bL21 from Wolbachia sp. subsp. Brugia malayi (strain TRS).